A 222-amino-acid chain; its full sequence is Isoprenyl transferase (222 aa).

The active site involves Asp12. Asp12 provides a ligand contact to Mg(2+). Residues 13-16, Trp17, and 57-59 contribute to the substrate site; these read GNRR and STE. The active-site Proton acceptor is the Asn60. Residues Trp61, Arg63, Arg171, and 177–179 each bind substrate; that span reads RLS. Glu190 contributes to the Mg(2+) binding site.

The protein belongs to the UPP synthase family. As to quaternary structure, homodimer. The cofactor is Mg(2+).

Catalyzes the condensation of isopentenyl diphosphate (IPP) with allylic pyrophosphates generating different type of terpenoids. This is Isoprenyl transferase (uppS) from Campylobacter jejuni subsp. jejuni serotype O:2 (strain ATCC 700819 / NCTC 11168).